The chain runs to 243 residues: MSDVTLLRIGIAIVGILFVAAVFFFSTPKTSAHRVRTKKEEPPRERREPMLSTEVDNSPHQSVDEVPASVPQQQVNPEATKPGEIELGKRPTNHFDKIILLFVAAKAEHTLRGEDIVVAAEKTGMIFGYMNVFHRLVEGYPERGPIFSMASILKPGSFDMANIREMQIPAISFFLTLPAPMTALDAWEKMLPTVQRMAELLDGVVLDESRNALGRQRIAHIRDELRAYDRQQQVPPLIKNSRW.

The Periplasmic portion of the chain corresponds to 1–4 (MSDV). Residues 5-25 (TLLRIGIAIVGILFVAAVFFF) traverse the membrane as a helical segment. Topologically, residues 26–243 (STPKTSAHRV…VPPLIKNSRW (218 aa)) are cytoplasmic. The interval 32–89 (AHRVRTKKEEPPRERREPMLSTEVDNSPHQSVDEVPASVPQQQVNPEATKPGEIELGK) is disordered. A compositionally biased stretch (basic and acidic residues) spans 38 to 49 (KKEEPPRERREP).

Belongs to the ZipA family. Interacts with FtsZ via their C-terminal domains.

The protein localises to the cell inner membrane. Functionally, essential cell division protein that stabilizes the FtsZ protofilaments by cross-linking them and that serves as a cytoplasmic membrane anchor for the Z ring. Also required for the recruitment to the septal ring of downstream cell division proteins. The protein is Cell division protein ZipA of Xylella fastidiosa (strain Temecula1 / ATCC 700964).